We begin with the raw amino-acid sequence, 258 residues long: Tetratricopeptide repeat protein 33 (258 aa).

TPR repeat units lie at residues 59–92 (SKRLKEEGGLLAEDGRQKEALTKWDEAIQLTPGD), 93–126 (AALYEMKAQVLMGVHEIFPAVQAAETAVQRNPHF), and 127–160 (VEAWQTLGRAQLSLGEITMAIRSFQIGLHICPAN). A disordered region spans residues 231–258 (SASGSENLSDRKEDKVETNDSKEFIKAR). Residues 238–258 (LSDRKEDKVETNDSKEFIKAR) are compositionally biased toward basic and acidic residues.

The protein is Tetratricopeptide repeat protein 33 (ttc33) of Xenopus laevis (African clawed frog).